The following is a 476-amino-acid chain: Glycogen synthase (476 aa).

Position 15 (Lys-15) interacts with ADP-alpha-D-glucose.

This sequence belongs to the glycosyltransferase 1 family. Bacterial/plant glycogen synthase subfamily.

The catalysed reaction is [(1-&gt;4)-alpha-D-glucosyl](n) + ADP-alpha-D-glucose = [(1-&gt;4)-alpha-D-glucosyl](n+1) + ADP + H(+). It participates in glycan biosynthesis; glycogen biosynthesis. In terms of biological role, synthesizes alpha-1,4-glucan chains using ADP-glucose. The chain is Glycogen synthase from Ligilactobacillus salivarius (strain UCC118) (Lactobacillus salivarius).